Here is a 179-residue protein sequence, read N- to C-terminus: uncharacterized protein (179 aa).

The chain crosses the membrane as a helical span at residues 5–25 (MLAGIGIGVAAALGVAAVASL).

It to Rickettsia 17 kDa surface antigen.

It is found in the membrane. This is an uncharacterized protein from Escherichia coli O6:H1 (strain CFT073 / ATCC 700928 / UPEC).